The sequence spans 500 residues: Chromosomal replication initiator protein DnaA (500 aa).

Positions 1-81 (MVNASGDPVI…LQALRTVTGE (81 aa)) are domain I, interacts with DnaA modulators. Positions 81–155 (ENMFPAFKVV…QQKMNRDPET (75 aa)) are domain II. A domain III, AAA+ region region spans residues 156–377 (HLNKNFTFDS…GALTRVTAVA (222 aa)). Residues Gly-200, Gly-202, Lys-203, and Thr-204 each coordinate ATP. The interval 378–500 (SLSNQPVTRA…TVRLKQSNTN (123 aa)) is domain IV, binds dsDNA.

It belongs to the DnaA family. Oligomerizes as a right-handed, spiral filament on DNA at oriC.

The protein localises to the cytoplasm. Functionally, plays an essential role in the initiation and regulation of chromosomal replication. ATP-DnaA binds to the origin of replication (oriC) to initiate formation of the DNA replication initiation complex once per cell cycle. Binds the DnaA box (a 9 base pair repeat at the origin) and separates the double-stranded (ds)DNA. Forms a right-handed helical filament on oriC DNA; dsDNA binds to the exterior of the filament while single-stranded (ss)DNA is stabiized in the filament's interior. The ATP-DnaA-oriC complex binds and stabilizes one strand of the AT-rich DNA unwinding element (DUE), permitting loading of DNA polymerase. After initiation quickly degrades to an ADP-DnaA complex that is not apt for DNA replication. Binds acidic phospholipids. This is Chromosomal replication initiator protein DnaA from Bifidobacterium longum (strain DJO10A).